The sequence spans 115 residues: Ribonuclease P protein component (115 aa).

This sequence belongs to the RnpA family. Consists of a catalytic RNA component (M1 or rnpB) and a protein subunit.

It catalyses the reaction Endonucleolytic cleavage of RNA, removing 5'-extranucleotides from tRNA precursor.. Functionally, RNaseP catalyzes the removal of the 5'-leader sequence from pre-tRNA to produce the mature 5'-terminus. It can also cleave other RNA substrates such as 4.5S RNA. The protein component plays an auxiliary but essential role in vivo by binding to the 5'-leader sequence and broadening the substrate specificity of the ribozyme. This chain is Ribonuclease P protein component, found in Staphylococcus carnosus (strain TM300).